The primary structure comprises 131 residues: Putative pre-16S rRNA nuclease (131 aa).

Belongs to the YqgF nuclease family.

The protein localises to the cytoplasm. In terms of biological role, could be a nuclease involved in processing of the 5'-end of pre-16S rRNA. The protein is Putative pre-16S rRNA nuclease of Bordetella avium (strain 197N).